The chain runs to 216 residues: Adenylate kinase (216 aa).

Residue Gly-10–Thr-15 coordinates ATP. The NMP stretch occupies residues Ser-30–Val-59. AMP contacts are provided by residues Thr-31, Arg-36, Gln-57–Val-59, Gly-85–Arg-88, and Gln-92. Residues Gly-126 to Asp-163 are LID. Arg-127 lines the ATP pocket. Zn(2+) contacts are provided by Cys-130 and Cys-133. Ser-136–Tyr-137 lines the ATP pocket. Zn(2+) is bound by residues Cys-150 and Cys-153. Residues Arg-160 and Arg-171 each contribute to the AMP site. Lys-199 is an ATP binding site.

This sequence belongs to the adenylate kinase family. Monomer.

The protein localises to the cytoplasm. The catalysed reaction is AMP + ATP = 2 ADP. It functions in the pathway purine metabolism; AMP biosynthesis via salvage pathway; AMP from ADP: step 1/1. Catalyzes the reversible transfer of the terminal phosphate group between ATP and AMP. Plays an important role in cellular energy homeostasis and in adenine nucleotide metabolism. The polypeptide is Adenylate kinase (Clostridium tetani (strain Massachusetts / E88)).